The chain runs to 236 residues: Small ribosomal subunit protein bS21m (236 aa).

The interval 65–136 (KPAAGAAAGG…SSKPSPMQTW (72 aa)) is disordered. Residues 107–131 (SNSSTSSSSSSSSSGGALYSSSKPS) are compositionally biased toward low complexity.

This sequence belongs to the bacterial ribosomal protein bS21 family. As to quaternary structure, component of the mitochondrial small ribosomal subunit (mt-SSU). Mature N.crassa 74S mitochondrial ribosomes consist of a small (37S) and a large (54S) subunit. The 37S small subunit contains a 16S ribosomal RNA (16S mt-rRNA) and 32 different proteins. The 54S large subunit contains a 23S rRNA (23S mt-rRNA) and 42 different proteins.

The protein resides in the mitochondrion. Component of the mitochondrial ribosome (mitoribosome), a dedicated translation machinery responsible for the synthesis of mitochondrial genome-encoded proteins, including at least some of the essential transmembrane subunits of the mitochondrial respiratory chain. The mitoribosomes are attached to the mitochondrial inner membrane and translation products are cotranslationally integrated into the membrane. The sequence is that of Small ribosomal subunit protein bS21m (mrp21) from Neurospora crassa (strain ATCC 24698 / 74-OR23-1A / CBS 708.71 / DSM 1257 / FGSC 987).